We begin with the raw amino-acid sequence, 125 residues long: U11-myrmicitoxin-Ta1a (125 aa).

The first 21 residues, 1-21 (MKTVIFILGFAFVAILIPTNG), serve as a signal peptide directing secretion. Residues 22–91 (ESMADADAMA…RAMAAAYAAA (70 aa)) constitute a propeptide that is removed on maturation. Cysteine 101 and cysteine 124 form a disulfide bridge.

The protein belongs to the formicidae venom precursor-01 superfamily. As to expression, expressed by the venom gland.

It localises to the secreted. Its subcellular location is the target cell membrane. Neurotoxin that causes irreversible rapid flaccid paralysis in blowflies and honeybees upon intrathoracic injection. Causes a quick and irreversible cytolytic effect (at 10 uM) indicating it possibly acts as a pore-forming peptide. Shows only weak effect on aphids (A.pisum) at high doses 24 hours post intrathoracic injection. In vitro, is not cytotoxic on the dipteran S2 Drosophila embryonic cell line. In Tetramorium africanum (Fierce ant), this protein is U11-myrmicitoxin-Ta1a.